A 356-amino-acid polypeptide reads, in one-letter code: MAVPGKKKLVAQEELRKLMKAKQRESSSKKRIESPLAKYNSLGHLSCVVCNSLIKSELLWPAHILGKQHKEKVAELKGTKATTSSPSNTIEYPRITKRKGSEPEKQESKRTKGSEDHPSASTTKLPEEFFEKEKTSSAGNAPSLKLLAGDYEDVDDDDAEEGEEYENAKEASSSLLKPAEIPLPPPTSSADNLPADFFENKMPLVSHSGSVLKADIQEKIVERKENTAEALPEGFFDDPEVDAKVRKVDAPKDQMDKEWEEFQKEIRQVNTVSEAIVAEEDEEGRLDRQIDEIDEQIQCYRRVEHLRDRKDTLQDAKMEVLKSKSNEKWQDEIGSDDEEKLPSLLYQNWREKGAFH.

Positions 11–33 (AQEELRKLMKAKQRESSSKKRIE) form a coiled coil. The segment at 47–69 (CVVCNSLIKSELLWPAHILGKQH) adopts a C2H2-type zinc-finger fold. Positions 71-195 (EKVAELKGTK…PTSSADNLPA (125 aa)) are disordered. Over residues 80-90 (KATTSSPSNTI) the composition is skewed to polar residues. 2 stretches are compositionally biased toward basic and acidic residues: residues 99 to 118 (KGSE…EDHP) and 125 to 135 (LPEEFFEKEKT). Acidic residues predominate over residues 150-165 (DYEDVDDDDAEEGEEY). Residues 278 to 322 (AEEDEEGRLDRQIDEIDEQIQCYRRVEHLRDRKDTLQDAKMEVLK) adopt a coiled-coil conformation.

The protein localises to the nucleus. Its subcellular location is the chromosome. It is found in the nucleus speckle. Its function is as follows. May act as an important regulator of the cell cycle that participates in the maintenance of genome integrity. The sequence is that of Zinc finger protein 830 from Xenopus laevis (African clawed frog).